The following is a 26-amino-acid chain: Conotoxin Eb6.18 (26 aa).

Disulfide bonds link Cys7–Cys18 and Cys13–Cys25.

The protein belongs to the conotoxin O1 superfamily. In terms of tissue distribution, expressed by the venom duct.

The protein resides in the secreted. This is Conotoxin Eb6.18 (E1) from Conus ebraeus (Hebrew cone).